Reading from the N-terminus, the 295-residue chain is UDP-N-acetylenolpyruvoylglucosamine reductase (295 aa).

One can recognise an FAD-binding PCMH-type domain in the interval 23-188; that stretch reads KVGGPADFLA…ISAKFALKPG (166 aa). The active site involves R167. The Proton donor role is filled by S217. The active site involves E287.

This sequence belongs to the MurB family. FAD is required as a cofactor.

It is found in the cytoplasm. It carries out the reaction UDP-N-acetyl-alpha-D-muramate + NADP(+) = UDP-N-acetyl-3-O-(1-carboxyvinyl)-alpha-D-glucosamine + NADPH + H(+). It functions in the pathway cell wall biogenesis; peptidoglycan biosynthesis. In terms of biological role, cell wall formation. In Streptococcus pyogenes serotype M49 (strain NZ131), this protein is UDP-N-acetylenolpyruvoylglucosamine reductase.